The sequence spans 73 residues: Putative beta-defensin 108A (73 aa).

Positions M1–G22 are cleaved as a signal peptide. Intrachain disulfides connect C28–C55, C35–C49, and C39–C56.

This sequence belongs to the beta-defensin family.

It localises to the secreted. Has antibacterial activity. This is Putative beta-defensin 108A from Homo sapiens (Human).